The primary structure comprises 447 residues: Selenide, water dikinase 3 (447 aa).

Sec50 is an active-site residue. Position 50 (Sec50) is a non-standard amino acid, selenocysteine. ATP contacts are provided by residues Lys53, 103–105, Asp123, Asp146, and 197–200; these read GMD and GGQT. Asp105 contacts Mg(2+). Asp146 contributes to the Mg(2+) binding site. Asp301 contributes to the Mg(2+) binding site.

The protein belongs to the selenophosphate synthase 1 family. Homodimer. The cofactor is Mg(2+). In the embryo, expressed in retina, olfactory vesicles, tectum, pronephros ducts and myotomes at 24 hours post-fertilization and in retina, tectum, liver and intestinal bulb 3 days after fertilization.

The catalysed reaction is hydrogenselenide + ATP + H2O = selenophosphate + AMP + phosphate + 2 H(+). In terms of biological role, synthesizes selenophosphate from selenide and ATP. The protein is Selenide, water dikinase 3 of Danio rerio (Zebrafish).